Consider the following 321-residue polypeptide: Ribosomal RNA small subunit methyltransferase H (321 aa).

Residues 44-46 (GGH), Asp64, Phe88, Asp109, and Gln116 each bind S-adenosyl-L-methionine.

The protein belongs to the methyltransferase superfamily. RsmH family.

It localises to the cytoplasm. It catalyses the reaction cytidine(1402) in 16S rRNA + S-adenosyl-L-methionine = N(4)-methylcytidine(1402) in 16S rRNA + S-adenosyl-L-homocysteine + H(+). Its function is as follows. Specifically methylates the N4 position of cytidine in position 1402 (C1402) of 16S rRNA. The polypeptide is Ribosomal RNA small subunit methyltransferase H (Methylobacillus flagellatus (strain ATCC 51484 / DSM 6875 / VKM B-1610 / KT)).